A 440-amino-acid chain; its full sequence is Chromosome partition protein MukF (440 aa).

The leucine-zipper stretch occupies residues 208-236 (LSETSGTLRELQDTLEAAGDKLQANLLRI).

This sequence belongs to the MukF family. Interacts, and probably forms a ternary complex, with MukE and MukB via its C-terminal region. The complex formation is stimulated by calcium or magnesium. It is required for an interaction between MukE and MukB.

The protein resides in the cytoplasm. It is found in the nucleoid. Its function is as follows. Involved in chromosome condensation, segregation and cell cycle progression. May participate in facilitating chromosome segregation by condensation DNA from both sides of a centrally located replisome during cell division. Not required for mini-F plasmid partitioning. Probably acts via its interaction with MukB and MukE. Overexpression results in anucleate cells. It has a calcium binding activity. The sequence is that of Chromosome partition protein MukF from Yersinia pestis.